We begin with the raw amino-acid sequence, 388 residues long: Succinyl-diaminopimelate desuccinylase (388 aa).

Residue H72 coordinates Zn(2+). Residue D74 is part of the active site. Zn(2+) is bound at residue D105. Residue E139 is the Proton acceptor of the active site. E140, E168, and H353 together coordinate Zn(2+).

It belongs to the peptidase M20A family. DapE subfamily. In terms of assembly, homodimer. The cofactor is Zn(2+). Co(2+) serves as cofactor.

The catalysed reaction is N-succinyl-(2S,6S)-2,6-diaminopimelate + H2O = (2S,6S)-2,6-diaminopimelate + succinate. Its pathway is amino-acid biosynthesis; L-lysine biosynthesis via DAP pathway; LL-2,6-diaminopimelate from (S)-tetrahydrodipicolinate (succinylase route): step 3/3. Its function is as follows. Catalyzes the hydrolysis of N-succinyl-L,L-diaminopimelic acid (SDAP), forming succinate and LL-2,6-diaminopimelate (DAP), an intermediate involved in the bacterial biosynthesis of lysine and meso-diaminopimelic acid, an essential component of bacterial cell walls. This chain is Succinyl-diaminopimelate desuccinylase, found in Orientia tsutsugamushi (strain Ikeda) (Rickettsia tsutsugamushi).